Consider the following 549-residue polypeptide: Chaperonin GroEL (549 aa).

Residues 30–33 (TLGP), Lys51, 87–91 (DGTTT), Gly415, 479–481 (NAA), and Asp495 each bind ATP.

It belongs to the chaperonin (HSP60) family. In terms of assembly, forms a cylinder of 14 subunits composed of two heptameric rings stacked back-to-back. Interacts with the co-chaperonin GroES.

Its subcellular location is the cytoplasm. It carries out the reaction ATP + H2O + a folded polypeptide = ADP + phosphate + an unfolded polypeptide.. In terms of biological role, together with its co-chaperonin GroES, plays an essential role in assisting protein folding. The GroEL-GroES system forms a nano-cage that allows encapsulation of the non-native substrate proteins and provides a physical environment optimized to promote and accelerate protein folding. This chain is Chaperonin GroEL, found in Stenotrophomonas maltophilia (strain R551-3).